A 340-amino-acid polypeptide reads, in one-letter code: Alcohol dehydrogenase (340 aa).

Cys40 and His63 together coordinate Zn(2+).

Belongs to the zinc-containing alcohol dehydrogenase family. Requires Zn(2+) as cofactor.

It catalyses the reaction a primary alcohol + NAD(+) = an aldehyde + NADH + H(+). It carries out the reaction a secondary alcohol + NAD(+) = a ketone + NADH + H(+). The chain is Alcohol dehydrogenase (adhA) from Rhizobium meliloti (strain 1021) (Ensifer meliloti).